Reading from the N-terminus, the 274-residue chain is MPFRSNNPITRDELLSRFFPQFHPVTTFNSGLSGGSFLIEHQGQRFVVRQPHDPDAPQSAFLRQYRALSQLPASIAPKPHLYLRDWMVVDYLPGAVKTYLPDTNELAGLLYYLHQQPRFGWRITLLPLLELYWQQSDPARRTVGWLRMLKRLRKAREPRPLRLSPLHMDVHAGNLVHSASGLKLIDWEYAGDGDIALELAAVWVENTEQHRQLVNDYATRAKIYPAQLWRQVRRWFPWLLMLKGGWFEYRWRQTGDQQFIRLADDTWRQLLIKQ.

The protein belongs to the thiamine kinase family.

The catalysed reaction is thiamine + ATP = thiamine phosphate + ADP + H(+). The protein operates within cofactor biosynthesis; thiamine diphosphate biosynthesis; thiamine phosphate from thiamine: step 1/1. In terms of biological role, catalyzes the ATP-dependent phosphorylation of thiamine to thiamine phosphate. Is involved in thiamine salvage. In Shigella flexneri serotype 5b (strain 8401), this protein is Thiamine kinase.